Reading from the N-terminus, the 223-residue chain is Transmembrane protein 235 (223 aa).

The first 28 residues, 1-28 (MARLGALLLAAALGALLSFALLAAAVAS), serve as a signal peptide directing secretion. Residue Asn-41 is glycosylated (N-linked (GlcNAc...) asparagine). 3 helical membrane-spanning segments follow: residues 96 to 116 (VIVVLPLSLVLLVCGWICGLL), 126 to 146 (LLFTGCYFLLGSVLTLAGVSI), and 176 to 196 (WSMALAWGSCALEAFSGTLLL).

This sequence belongs to the PMP-22/EMP/MP20 family. In terms of processing, N-glycosylated.

Its subcellular location is the membrane. The protein resides in the endoplasmic reticulum. In Homo sapiens (Human), this protein is Transmembrane protein 235 (TMEM235).